Here is a 436-residue protein sequence, read N- to C-terminus: O-phosphoseryl-tRNA(Sec) selenium transferase (436 aa).

Positions 1 to 44 (MLDFNIEGLIPKNMEKRGELVLNEYLKEIEDVFNHRKIPENGID) are tetramerization. Residue Arg72 coordinates pyridoxal 5'-phosphate. Residues 93-103 (GRSGNLVDPQP) form a phosphate loop (P-loop) region. The substrate site is built by Arg94, Ser95, and Gln102. Lys278 carries the N6-(pyridoxal phosphate)lysine modification. A substrate-binding site is contributed by Arg307.

Belongs to the SepSecS family. Homotetramer. Pyridoxal 5'-phosphate serves as cofactor.

It catalyses the reaction O-phospho-L-seryl-tRNA(Sec) + selenophosphate + H2O = L-selenocysteinyl-tRNA(Sec) + 2 phosphate. The protein operates within aminoacyl-tRNA biosynthesis; selenocysteinyl-tRNA(Sec) biosynthesis; selenocysteinyl-tRNA(Sec) from L-seryl-tRNA(Sec) (archaeal/eukaryal route): step 2/2. Converts O-phosphoseryl-tRNA(Sec) to selenocysteinyl-tRNA(Sec) required for selenoprotein biosynthesis. This is O-phosphoseryl-tRNA(Sec) selenium transferase (spcS) from Methanococcus maripaludis (strain DSM 14266 / JCM 13030 / NBRC 101832 / S2 / LL).